The primary structure comprises 276 residues: 2-dehydro-3-deoxyphosphooctonate aldolase (276 aa).

Belongs to the KdsA family.

It is found in the cytoplasm. The enzyme catalyses D-arabinose 5-phosphate + phosphoenolpyruvate + H2O = 3-deoxy-alpha-D-manno-2-octulosonate-8-phosphate + phosphate. It functions in the pathway carbohydrate biosynthesis; 3-deoxy-D-manno-octulosonate biosynthesis; 3-deoxy-D-manno-octulosonate from D-ribulose 5-phosphate: step 2/3. It participates in bacterial outer membrane biogenesis; lipopolysaccharide biosynthesis. This Chelativorans sp. (strain BNC1) protein is 2-dehydro-3-deoxyphosphooctonate aldolase.